Reading from the N-terminus, the 73-residue chain is uncharacterized protein (73 aa).

This sequence belongs to the asfivirus I73R family.

It is found in the virion. This is an uncharacterized protein from Ornithodoros (relapsing fever ticks).